Here is a 263-residue protein sequence, read N- to C-terminus: Chymotrypsinogen B (263 aa).

Residues 1 to 18 (MAFLWLVSCFALVGATFG) form the signal peptide. 5 disulfide bridges follow: Cys19/Cys140, Cys60/Cys76, Cys154/Cys219, Cys186/Cys200, and Cys209/Cys238. The region spanning 34-261 (IVNGEDAIPG…LMPWVQQILE (228 aa)) is the Peptidase S1 domain. His75 serves as the catalytic Charge relay system. At Ser93 the chain carries Phosphoserine. The Charge relay system role is filled by Asp120. Catalysis depends on Ser213, which acts as the Charge relay system.

It belongs to the peptidase S1 family.

Its subcellular location is the secreted. It localises to the extracellular space. The catalysed reaction is Preferential cleavage: Tyr-|-Xaa, Trp-|-Xaa, Phe-|-Xaa, Leu-|-Xaa.. The chain is Chymotrypsinogen B (Ctrb1) from Rattus norvegicus (Rat).